The following is a 127-amino-acid chain: Transcription initiation factor IIA subunit 2 (127 aa).

This sequence belongs to the TFIIA subunit 2 family. In terms of assembly, TFIIA is a heterodimer composed of the large TOA1 and the small TOA2 subunits.

It is found in the nucleus. Its function is as follows. TFIIA is a component of the transcription machinery of RNA polymerase II and plays an important role in transcriptional activation. TFIIA in a complex with tbp mediates transcriptional activity. The sequence is that of Transcription initiation factor IIA subunit 2 (TOA2) from Cryptococcus neoformans var. neoformans serotype D (strain B-3501A) (Filobasidiella neoformans).